Here is a 253-residue protein sequence, read N- to C-terminus: Triosephosphate isomerase, cytosolic (253 aa).

Asn-10 and Lys-12 together coordinate substrate. The Electrophile role is filled by His-96. Glu-166 acts as the Proton acceptor in catalysis.

It belongs to the triosephosphate isomerase family. In terms of assembly, homodimer. In terms of tissue distribution, starchy endosperm.

It is found in the cytoplasm. The enzyme catalyses D-glyceraldehyde 3-phosphate = dihydroxyacetone phosphate. It functions in the pathway carbohydrate biosynthesis; gluconeogenesis. Its pathway is carbohydrate degradation; glycolysis; D-glyceraldehyde 3-phosphate from glycerone phosphate: step 1/1. This is Triosephosphate isomerase, cytosolic from Hordeum vulgare (Barley).